The following is a 649-amino-acid chain: MSKFLDMLSGSQCVSLEKCGDVVVSTNDCMIALYCHFCRDLFTQLPEFLRHLQSNHSDVLHFTKEHNVYSVEELLSGEQGKAHEDAQSAGHNSSSGDSSSLMNSEDSRAIEGSEDNSDNSPMKPEQIGKQSEINLLAEVTNILLQTNDKELKPENGVFNRPRKKANNESSSLKICDLKSHTIARTSRKRMSMVKNRILRVLDSDLSAKLEIKPPEPNSKLSITEPIQEDNIPGTCFDTPTKPIPSSSQLSVRKSSLTEANQICTKYAEKKTAPTMPKLLNCVPKPILTSQQAHTNAEISEINETYHLAASQVTKTTKTFPVKITQIDILQPVKLPKTLITPINEEGVSDQVENSTNNINNAQSLPKENTKKFFKKRSELGIKAQGSPNKFFKIIKSKANPIIVKRVQTTSAKASTNKIQIRSNDKTNCFASEFNSTKIRKLKMENCVDLKSEDPCANTNTRLNKLATISSCEILKAVGLPAITDNPIEDTLLPDELETIRKKADQFIKIYRKYDSIWNYRKICPPAKPDFISQQIFALTREVNKTMLCNLANSDIKGIINQISVWHYNIYTQYIDLDTISENARYTLKLFSFLPVSFAYFCKCCDDIFILKKEYLKHLISHQVRFQCTKCIKVFKYKGYYEKHLRNAHS.

The segment at 33–56 (LYCHFCRDLFTQLPEFLRHLQSNH) adopts a C2H2-type 1 zinc-finger fold. The interval 78-126 (EQGKAHEDAQSAGHNSSSGDSSSLMNSEDSRAIEGSEDNSDNSPMKPEQ) is disordered. The segment covering 88-104 (SAGHNSSSGDSSSLMNS) has biased composition (low complexity). 2 C2H2-type zinc fingers span residues 599–621 (YFCK…LISH) and 625–648 (FQCT…RNAH).

It belongs to the Teflon family. Expressed at a low level in a variety of tissues, highest expression is in testis.

The protein resides in the nucleus. The protein localises to the chromosome. Specifically required in males for proper segregation of autosomal bivalents at meiosis I. Expression is required in the male germ line prior to spermatocyte stage S4. May have a role as a bridging molecule maintaining adhesion to hold autosome bivalents together via heterochromatic connections. The polypeptide is Protein teflon (Drosophila melanogaster (Fruit fly)).